A 425-amino-acid chain; its full sequence is Amidase 1 (425 aa).

Ala-2 carries the N-acetylalanine modification. Active-site charge relay system residues include Lys-36 and Ser-113. Catalysis depends on Ser-137, which acts as the Acyl-ester intermediate.

Belongs to the amidase family. As to expression, expressed in cotyledons, leaves and flower buds. Lower levels in roots, stems and siliques.

The protein resides in the cytoplasm. It localises to the nucleus. Its subcellular location is the nucleoplasm. The catalysed reaction is a monocarboxylic acid amide + H2O = a monocarboxylate + NH4(+). The enzyme catalyses indole-3-acetamide + H2O = (indol-3-yl)acetate + NH4(+). It catalyses the reaction 2-phenylacetamide + H2O = 2-phenylacetate + NH4(+). It carries out the reaction L-asparagine + H2O = L-aspartate + NH4(+). The catalysed reaction is 1-naphthaleneacetamide + H2O = 1-naphthaleneacetate + NH4(+). Inhibited by phenylmethylsulfonyl fluoride (PMSF). Its function is as follows. Amidase involved in auxin biosynthesis. Converts indole-3-acetamide to indole-3-acetate. Converts phenyl-2-acetamide (PAM) to phenyl-2-acetate. Substrate preference is PAM &gt; IAM. Can also use L-asparagine and 1-naphtalene-acetamide as substrates, but not indole-3-acetonitrile or indole-3-acetyl-L-aspartic acid. The chain is Amidase 1 from Arabidopsis thaliana (Mouse-ear cress).